A 65-amino-acid polypeptide reads, in one-letter code: Large ribosomal subunit protein bL35 (65 aa).

Residues 1–29 form a disordered region; sequence MPKMKTNRGAAKRFKKTGSGRIKRGKAFT. Residues 10-26 show a composition bias toward basic residues; the sequence is AAKRFKKTGSGRIKRGK.

The protein belongs to the bacterial ribosomal protein bL35 family.

The polypeptide is Large ribosomal subunit protein bL35 (Desulfotalea psychrophila (strain LSv54 / DSM 12343)).